A 307-amino-acid polypeptide reads, in one-letter code: Acetaldehyde dehydrogenase 2 (307 aa).

Residue 13–16 (SGNI) coordinates NAD(+). Cysteine 132 (acyl-thioester intermediate) is an active-site residue. NAD(+) is bound by residues 163 to 171 (SIGPGTRAN) and asparagine 274.

This sequence belongs to the acetaldehyde dehydrogenase family.

The enzyme catalyses acetaldehyde + NAD(+) + CoA = acetyl-CoA + NADH + H(+). The protein is Acetaldehyde dehydrogenase 2 of Methylibium petroleiphilum (strain ATCC BAA-1232 / LMG 22953 / PM1).